The primary structure comprises 520 residues: Ribonuclease Y (520 aa).

A helical transmembrane segment spans residues 3–23; that stretch reads IVIVVISILLALIVGIVVGYL. Basic and acidic residues predominate over residues 81-118; the sequence is RMEAQKQENRLMQKEENLDRKSETLDKRESSLESKEQS. The interval 81–125 is disordered; that stretch reads RMEAQKQENRLMQKEENLDRKSETLDKRESSLESKEQSLTEQQQQ. The region spanning 210 to 273 is the KH domain; it reads TVSVVNLPND…EIARMALEKL (64 aa). Residues 336 to 429 form the HD domain; sequence GLKHSAEVAY…VAAADALSAA (94 aa).

The protein belongs to the RNase Y family.

Its subcellular location is the cell membrane. Functionally, endoribonuclease that initiates mRNA decay. The protein is Ribonuclease Y of Oceanobacillus iheyensis (strain DSM 14371 / CIP 107618 / JCM 11309 / KCTC 3954 / HTE831).